The sequence spans 147 residues: MDPVRVAIQRLAHCFALPTCAHPGDAGLDLFAAHAVPLSIAPGRFTRVPTGIALGLPAGYMAFVQPRSGLAARHGISVLNTPGLIDCGYRGEIQVLLINHGEVPVVVSRGDRIAQLVVLPVPQVQFVEVSTLESSERQTGSFGSSGY.

Substrate-binding positions include 67-69 (RSG), N80, and 84-86 (LID).

It belongs to the dUTPase family. Requires Mg(2+) as cofactor.

It catalyses the reaction dUTP + H2O = dUMP + diphosphate + H(+). Its pathway is pyrimidine metabolism; dUMP biosynthesis; dUMP from dCTP (dUTP route): step 2/2. In terms of biological role, this enzyme is involved in nucleotide metabolism: it produces dUMP, the immediate precursor of thymidine nucleotides and it decreases the intracellular concentration of dUTP so that uracil cannot be incorporated into DNA. The sequence is that of Deoxyuridine 5'-triphosphate nucleotidohydrolase from Gloeobacter violaceus (strain ATCC 29082 / PCC 7421).